We begin with the raw amino-acid sequence, 171 residues long: Anthrone oxygenase dmxR16 (171 aa).

3 helical membrane-spanning segments follow: residues 21 to 41 (VIAAAFLSAITAGAMANISMI), 67 to 87 (GHIILPGICVGTCGLYAFSAL), and 96 to 116 (YALAGITTLSLVPFTWVFMTP). 2 N-linked (GlcNAc...) asparagine glycosylation sites follow: asparagine 118 and asparagine 129. A helical membrane pass occupies residues 145–165 (WLHATRSMFPLIGAILGFTGI).

Belongs to the anthrone oxygenase family.

It localises to the membrane. The enzyme catalyses emodin anthrone + O2 = emodin + H2O + H(+). Its pathway is secondary metabolite biosynthesis. In terms of biological role, anthrone oxygenase; part of the gene cluster that mediates the biosynthesis of the dimeric xanthones cryptosporioptides. The pathway begins with the synthesis of atrochrysone thioester by the polyketide synthase dmx-nrPKS. The atrochrysone carboxyl ACP thioesterase dmxR1 then breaks the thioester bond and releases the atrochrysone carboxylic acid from dmx-nrPKS. Atrochrysone carboxylic acid is decarboxylated by the decarboxylase dmxR15, and oxidized by the anthrone oxygenase dmxR16 to yield emodin. Emodin is then reduced to emodin hydroquinone by the oxidoreductase dmxR7. A-ring reduction by the short chain dehydrogenase dmxR18, dehydration by the scytalone dehydratase-like protein dmxR17 and probable spontaneous re-oxidation, results in overall deoxygenation to chrysophanol. Baeyer-Villiger oxidation by the Baeyer-Villiger monooxygenase (BVMO) dmxR6 then yields monodictylactone in equilibrium with monodictyphenone. In the case of the cryptosporioptides biosynthesis, monodictylactone is reduced at C-12 to an alcohol (by the short chain dehydrogenases dmxR12 or dmxR8) and hydroxylated at C-5 by dmxR9, yielding the electron-rich aromatic which could eliminate H(2)O to form the ortho-quinonemethide, followed by tautomerisation to paraquinone and complete the formal reduction to produce the 10-methylgroup. Conjugate addition of C-4a-OH to the resulting paraquinone by the monooxygenase dmxR10 then gives cyclohexadienone, which is then reduced at C-5 by the short chain dehydrogenase dmxR3 to give the dihydroxanthone. The 6,7-epoxide in the cryptosporioptides could be introduced by the cytochrome P450 monooxygenase dmxL3. The highly reducing PKS dmxL2 manufactures butyrate, which is further carboxylated by dmxL1 to form ethylmalonate. It is not yet clear whether the carboxylation occurs while the butyrate is attached to the ACP of dmxL2, but this unusual fungal metabolite could then be esterified to O-5 by the O-acetyltransferase dmxR13. Finally, dimerization performed by dmxR5 gives the observed dimers cryptosporioptides A, B and C as the final products of the pathway. The sequence is that of Anthrone oxygenase dmxR16 from Cryptosporiopsis sp. (strain 8999).